The primary structure comprises 401 residues: Thermophilic serine proteinase (401 aa).

A signal peptide spans 1–24 (MKFKAIVSLSLAVSMSLFPFLVEA). The propeptide occupies 25–121 (ASNDGVESPK…AEPNYLFNAA (97 aa)). D126 serves as a coordination point for Ca(2+). The 267-residue stretch at 133–399 (QYGPQNTYTD…YGRINSYNAV (267 aa)) folds into the Peptidase S8 domain. D160 (charge relay system) is an active-site residue. Positions 168, 169, 171, 179, 184, and 186 each coordinate Ca(2+). H193 acts as the Charge relay system in catalysis. Ca(2+) contacts are provided by E204, N207, T209, and I211. C258 and C260 are disulfide-bonded. Na(+)-binding residues include Y297, V300, and D323. S347 acts as the Charge relay system in catalysis.

The protein belongs to the peptidase S8 family. Requires Ca(2+) as cofactor. Na(+) serves as cofactor.

Its subcellular location is the secreted. In Bacillus sp. (strain AK1), this protein is Thermophilic serine proteinase.